The following is a 345-amino-acid chain: Biotin synthase (345 aa).

Residues arginine 38–alanine 256 form the Radical SAM core domain. [4Fe-4S] cluster contacts are provided by cysteine 53, cysteine 57, and cysteine 60. [2Fe-2S] cluster contacts are provided by cysteine 97, cysteine 128, cysteine 188, and arginine 260.

It belongs to the radical SAM superfamily. Biotin synthase family. Homodimer. [4Fe-4S] cluster is required as a cofactor. [2Fe-2S] cluster serves as cofactor.

It catalyses the reaction (4R,5S)-dethiobiotin + (sulfur carrier)-SH + 2 reduced [2Fe-2S]-[ferredoxin] + 2 S-adenosyl-L-methionine = (sulfur carrier)-H + biotin + 2 5'-deoxyadenosine + 2 L-methionine + 2 oxidized [2Fe-2S]-[ferredoxin]. It participates in cofactor biosynthesis; biotin biosynthesis; biotin from 7,8-diaminononanoate: step 2/2. Its function is as follows. Catalyzes the conversion of dethiobiotin (DTB) to biotin by the insertion of a sulfur atom into dethiobiotin via a radical-based mechanism. This is Biotin synthase from Pectobacterium atrosepticum (strain SCRI 1043 / ATCC BAA-672) (Erwinia carotovora subsp. atroseptica).